We begin with the raw amino-acid sequence, 632 residues long: Mediator of RNA polymerase II transcription subunit 17 (632 aa).

Disordered regions lie at residues 1–21 (MSDS…RPDS) and 50–72 (EDKH…DLET). Residues 11–21 (PIREKRDRPDS) are compositionally biased toward basic and acidic residues. Acidic residues predominate over residues 58–72 (EEDDEGDKESTDLET).

Belongs to the Mediator complex subunit 17 family. In terms of assembly, component of the Mediator complex.

The protein resides in the nucleus. In terms of biological role, component of the Mediator complex, a coactivator involved in the regulated transcription of nearly all RNA polymerase II-dependent genes. Mediator functions as a bridge to convey information from gene-specific regulatory proteins to the basal RNA polymerase II transcription machinery. Mediator is recruited to promoters by direct interactions with regulatory proteins and serves as a scaffold for the assembly of a functional preinitiation complex with RNA polymerase II and the general transcription factors. The chain is Mediator of RNA polymerase II transcription subunit 17 (srb4) from Emericella nidulans (strain FGSC A4 / ATCC 38163 / CBS 112.46 / NRRL 194 / M139) (Aspergillus nidulans).